The chain runs to 985 residues: MVKLTHLLARAWLVPLAYGASQSLLSTTAPSQPQFTIPASADVGAQLIANIDDPQAADAQSVCPGYKASKVQHNSRGFTASLQLAGRPCNVYGTDVESLTLSVEYQDSDRLNIQILPTHVDSTNASWYFLSENLVPRPKASLNASVSQSDLFVSWSNEPSFNFKVIRKATGDALFSTEGTVLVYENQFIEFVTALPEEYNLYGLGEHITQFRLQRNANLTIYPSDDGTPIDQNLYGQHPFYLDTRYYKGDRQNGSYIPVKSSEADASQDYISLSHGVFLRNSHGLEILLRSQKLIWRTLGGGIDLTFYSGPAPADVTRQYLTSTVGLPAMQQYNTLGFHQCRWGYNNWSDLADVVANFEKFEIPLEYIWTDIDYMHGYRNFDNDQHRFSYSEGDEFLSKLHESGRYYVPIVDAALYIPNPENASDAYATYDRGAADDVFLKNPDGSLYIGAVWPGYTVFPDWHHPKAVDFWANELVIWSKKVAFDGVWYDMSEVSSFCVGSCGTGNLTLNPAHPSFLLPGEPGDIIYDYPEAFNITNATEAASASAGASSQAAATATTTSTSVSYLRTTPTPGVRNVEHPPYVINHDQEGHDLSVHAVSPNATHVDGVEEYDVHGLYGHQGLNATYQGLLEVWSHKRRPFIIGRSTFAGSGKWAGHWGGDNYSKWWSMYYSISQALSFSLFGIPMFGADTCGFNGNSDEELCNRWMQLSAFFPFYRNHNELSTIPQEPYRWASVIEATKSAMRIRYAILPYFYTLFDLAHTTGSTVMRALSWEFPNDPTLAAVETQFMVGPAIMVVPVLEPLVNTVKGVFPGVGHGEVWYDWYTQAAVDAKPGVNTTISAPLGHIPVYVRGGNILPMQEPALTTREARQTPWALLAALGSNGTASGQLYLDDGESIYPNATLHVDFTASRSSLRSSAQGRWKERNPLANVTVLGVNKEPSAVTLNGQAVFPGSVTYNSTSQVLFVGGLQNLTKGGAWAENWVLEW.

The first 25 residues, 1-25, serve as a signal peptide directing secretion; the sequence is MVKLTHLLARAWLVPLAYGASQSLL. T36 carries an O-linked (Man) threonine glycan. N124, N143, N218, N347, and N422 each carry an N-linked (GlcNAc...) asparagine glycan. D490 serves as the catalytic Nucleophile. Residue E493 is part of the active site. Residues N506, N534, and N537 are each glycosylated (N-linked (GlcNAc...) asparagine). Residues S545 and S550 are each glycosylated (O-linked (Man) serine). The O-linked (Man) threonine glycan is linked to T559. O-linked (Man) serine glycosylation occurs at S560. O-linked (Man) threonine glycosylation occurs at T561. S562 carries an O-linked (Man) serine glycan. T571 carries an O-linked (Man) threonine glycan. 2 N-linked (GlcNAc...) asparagine glycosylation sites follow: N601 and N623. The Proton donor role is filled by D660. Residues N835 and N881 are each glycosylated (N-linked (GlcNAc...) asparagine). S895 is a glycosylation site (O-linked (Man) serine). N-linked (GlcNAc...) asparagine glycans are attached at residues N899, N957, and N970.

Belongs to the glycosyl hydrolase 31 family. In terms of processing, the O-linked saccharide is not identified, but is probably mannose.

It carries out the reaction Hydrolysis of terminal, non-reducing (1-&gt;4)-linked alpha-D-glucose residues with release of alpha-D-glucose.. Hydrolyzes malto-oligosaccharides, but has a low activity toward soluble starch. This is Alpha-glucosidase (aglA) from Aspergillus niger.